We begin with the raw amino-acid sequence, 84 residues long: RNA-binding protein Hfq (84 aa).

One can recognise a Sm domain in the interval 10-69; the sequence is DPFLNILRKERIPVSIYLVNGIKLQGQIDSFDQYVVLLKNSVTQMVYKHAISTIVPAKAI.

Belongs to the Hfq family. In terms of assembly, homohexamer.

Its function is as follows. RNA chaperone that binds small regulatory RNA (sRNAs) and mRNAs to facilitate mRNA translational regulation in response to envelope stress, environmental stress and changes in metabolite concentrations. Also binds with high specificity to tRNAs. The chain is RNA-binding protein Hfq from Nitrosomonas europaea (strain ATCC 19718 / CIP 103999 / KCTC 2705 / NBRC 14298).